Reading from the N-terminus, the 130-residue chain is Small ribosomal subunit protein uS8 (130 aa).

This sequence belongs to the universal ribosomal protein uS8 family. In terms of assembly, part of the 30S ribosomal subunit. Contacts proteins S5 and S12.

In terms of biological role, one of the primary rRNA binding proteins, it binds directly to 16S rRNA central domain where it helps coordinate assembly of the platform of the 30S subunit. In Onion yellows phytoplasma (strain OY-M), this protein is Small ribosomal subunit protein uS8.